We begin with the raw amino-acid sequence, 214 residues long: Putative AgrB-like protein (214 aa).

Helical transmembrane passes span 41 to 61, 82 to 102, 109 to 129, 154 to 174, and 182 to 202; these read IISVFIIGLLFNIALEALIFL, CTLLGIIISICIGFLVKSSFF, IIVFIGIVIFVFGYFIVFKFA, ILTIYLFIEILSIILYYNLGW, and LSIILGVAWQCITLTYIGNIL.

It belongs to the AgrB family.

It localises to the cell membrane. In terms of biological role, may be involved in the proteolytic processing of a quorum sensing system signal molecule precursor. This Clostridium perfringens (strain SM101 / Type A) protein is Putative AgrB-like protein.